The following is a 194-amino-acid chain: Imidazoleglycerol-phosphate dehydratase (194 aa).

The protein belongs to the imidazoleglycerol-phosphate dehydratase family.

The protein resides in the cytoplasm. The catalysed reaction is D-erythro-1-(imidazol-4-yl)glycerol 3-phosphate = 3-(imidazol-4-yl)-2-oxopropyl phosphate + H2O. Its pathway is amino-acid biosynthesis; L-histidine biosynthesis; L-histidine from 5-phospho-alpha-D-ribose 1-diphosphate: step 6/9. The protein is Imidazoleglycerol-phosphate dehydratase of Caldicellulosiruptor saccharolyticus (strain ATCC 43494 / DSM 8903 / Tp8T 6331).